The sequence spans 317 residues: Ribonuclease Z (317 aa).

Zn(2+) is bound by residues His-63, His-65, Asp-67, His-68, His-143, Asp-213, and His-273. Residue Asp-67 is the Proton acceptor of the active site.

Belongs to the RNase Z family. As to quaternary structure, homodimer. It depends on Zn(2+) as a cofactor.

The enzyme catalyses Endonucleolytic cleavage of RNA, removing extra 3' nucleotides from tRNA precursor, generating 3' termini of tRNAs. A 3'-hydroxy group is left at the tRNA terminus and a 5'-phosphoryl group is left at the trailer molecule.. In terms of biological role, zinc phosphodiesterase, which displays some tRNA 3'-processing endonuclease activity. Probably involved in tRNA maturation, by removing a 3'-trailer from precursor tRNA. This chain is Ribonuclease Z, found in Methanocaldococcus jannaschii (strain ATCC 43067 / DSM 2661 / JAL-1 / JCM 10045 / NBRC 100440) (Methanococcus jannaschii).